The chain runs to 448 residues: Nucleoprotein (448 aa).

The segment at 1 to 55 is disordered; that stretch reads MSFTPGKQSSSRASSGNRSGNGILKWADQSDQSRNVQTRGRRAQPKQTATSQQPS. Over residues 9-22 the composition is skewed to low complexity; the sequence is SSSRASSGNRSGNG. Polar residues-rich tracts occupy residues 29-38 and 45-55; these read QSDQSRNVQT and PKQTATSQQPS. An RNA-binding region spans residues 52 to 194; it reads QQPSGGNVVP…GYYIEGSGRS (143 aa). Positions 61–190 constitute a CoV N NTD domain; the sequence is PYYSWFSGIT…VLPQGYYIEG (130 aa). Arginine 106, arginine 122, and arginine 164 together coordinate RNA. The segment at 157–231 is disordered; the sequence is TPADILDRDP…RTPTSGVTPD (75 aa). Phosphoserine; by host is present on serine 167. Threonine 174 carries the post-translational modification Phosphothreonine; by host. Phosphoserine; by host is present on serine 191. Low complexity predominate over residues 193–223; sequence RSAPNSRSTSRASSRASSAGSRSRANSGNRT. Residues 259–384 form the CoV N CTD domain; the sequence is AKEIRQKILN…ENLNAYQQQD (126 aa). The interval 266–384 is dimerization; sequence ILNKPRQKRS…ENLNAYQQQD (119 aa). Residues 385–448 form a disordered region; the sequence is GMMNMSPKPQ…EPYTEDTSEI (64 aa). Serine 390 bears the Phosphoserine; by host mark. Positions 399 to 409 are enriched in polar residues; sequence QKNGQGENDNI. Over residues 422-439 the composition is skewed to basic and acidic residues; the sequence is KSRELTAEDISLLKKMDE. The residue at position 423 (serine 423) is a Phosphoserine; by host. Threonine 427 is modified (phosphothreonine; by host).

The protein belongs to the betacoronavirus nucleocapsid protein family. Homooligomer. Both monomeric and oligomeric forms interact with RNA. Interacts with protein M. Interacts with NSP3; this interaction serves to tether the genome to the newly translated replicase-transcriptase complex at a very early stage of infection. In terms of processing, ADP-ribosylated. The ADP-ribosylation is retained in the virion during infection. Post-translationally, phosphorylated on serine and threonine residues.

The protein localises to the virion. It localises to the host endoplasmic reticulum-Golgi intermediate compartment. It is found in the host Golgi apparatus. In terms of biological role, packages the positive strand viral genome RNA into a helical ribonucleocapsid (RNP) and plays a fundamental role during virion assembly through its interactions with the viral genome and membrane protein M. Plays an important role in enhancing the efficiency of subgenomic viral RNA transcription as well as viral replication. In Bovine coronavirus (strain F15) (BCoV), this protein is Nucleoprotein.